The following is a 482-amino-acid chain: MENKIEVNNKDEMNKWFEEFKKGNGLVDTFTNPYSFCESVPNLERFVFQMASATDDAQKDSIYASALVEATKFCAPIYECAWVSSTGIVKKGLEWFEKNAGTIKSWDESYIELKVEVPKIEQLANYQQAALKWRKDIGFRVNANTAALSHKVLAEYKVPGEIVMSVKEMLSDMIRRRNLILNRGGDENPRGPVSREHVEWCREFVKGKYIMAFNPPWGDINKSGRSGIALVATGLAKLAETEGKGVFDEAKKTVEALNGYLDKHKDEVDKASADNMITNLLKHIAKAQELYKNSSALRAQGAQIDTAFSSYYWLYKAGVTPETFPTVSQFLFELGKQPRGTKKMKKALLSTPMKWGKKLYELFADDSFQQNRIYMHPAVLTAGRISEMGVCFGTIPVANPDDAAQGSGHTKSILNLRTNTETNNPCAKTIVKLFEIQKTGFNIQDMDIVASEHLLHQSLVGKQSPFQNAYNVKGNATSANII.

Residues 266–269 (DEVD) carry the DEVD motif.

Belongs to the nairovirus nucleocapsid protein family. In terms of assembly, probable homooligomer; forms a double superhelical polymer. Monomer. Mn(2+) serves as cofactor. In terms of processing, cleaved at the DQVD motif by host CASP3/caspase 3 in mammalian cells at 48 hours postinfection giving rise to cleavage products of about 30 kDa and 22 kDa that remain associated. Only the monomeric form is cleaved. Little or no cleavage in tick cells. Caspase cleavage reduces the viral polymerase activity. Caspase cleavage is not required for productive infection in mammalian or tick host cells.

It localises to the virion. Its function is as follows. Binds dsRNA and ssRNA and probably participates in the packaging of viral genome. In the dsRNA binding mode, the nucleocapsid protein specifically binds to the vRNA panhandle secondary structure formed at the termini of viral genome. Does not discriminate between viral and nonviral RNAs through ssRNA binding mode. Displays dsDNA endonuclease activity that is sequence non-specific. This Crimean-Congo hemorrhagic fever virus (isolate C68031) (CCHFV) protein is Nucleoprotein (N).